The primary structure comprises 157 residues: Crossover junction endodeoxyribonuclease RuvC (157 aa).

Active-site residues include D7, E67, and D139. Mg(2+) is bound by residues D7, E67, and D139.

It belongs to the RuvC family. As to quaternary structure, homodimer which binds Holliday junction (HJ) DNA. The HJ becomes 2-fold symmetrical on binding to RuvC with unstacked arms; it has a different conformation from HJ DNA in complex with RuvA. In the full resolvosome a probable DNA-RuvA(4)-RuvB(12)-RuvC(2) complex forms which resolves the HJ. It depends on Mg(2+) as a cofactor.

The protein localises to the cytoplasm. The enzyme catalyses Endonucleolytic cleavage at a junction such as a reciprocal single-stranded crossover between two homologous DNA duplexes (Holliday junction).. The RuvA-RuvB-RuvC complex processes Holliday junction (HJ) DNA during genetic recombination and DNA repair. Endonuclease that resolves HJ intermediates. Cleaves cruciform DNA by making single-stranded nicks across the HJ at symmetrical positions within the homologous arms, yielding a 5'-phosphate and a 3'-hydroxyl group; requires a central core of homology in the junction. The consensus cleavage sequence is 5'-(A/T)TT(C/G)-3'. Cleavage occurs on the 3'-side of the TT dinucleotide at the point of strand exchange. HJ branch migration catalyzed by RuvA-RuvB allows RuvC to scan DNA until it finds its consensus sequence, where it cleaves and resolves the cruciform DNA. The protein is Crossover junction endodeoxyribonuclease RuvC of Prochlorococcus marinus subsp. pastoris (strain CCMP1986 / NIES-2087 / MED4).